Consider the following 258-residue polypeptide: Acyl-[acyl-carrier-protein]--UDP-N-acetylglucosamine O-acyltransferase (258 aa).

Belongs to the transferase hexapeptide repeat family. LpxA subfamily. Homotrimer.

The protein resides in the cytoplasm. The enzyme catalyses a (3R)-hydroxyacyl-[ACP] + UDP-N-acetyl-alpha-D-glucosamine = a UDP-3-O-[(3R)-3-hydroxyacyl]-N-acetyl-alpha-D-glucosamine + holo-[ACP]. The protein operates within glycolipid biosynthesis; lipid IV(A) biosynthesis; lipid IV(A) from (3R)-3-hydroxytetradecanoyl-[acyl-carrier-protein] and UDP-N-acetyl-alpha-D-glucosamine: step 1/6. Functionally, involved in the biosynthesis of lipid A, a phosphorylated glycolipid that anchors the lipopolysaccharide to the outer membrane of the cell. The chain is Acyl-[acyl-carrier-protein]--UDP-N-acetylglucosamine O-acyltransferase from Alkalilimnicola ehrlichii (strain ATCC BAA-1101 / DSM 17681 / MLHE-1).